Reading from the N-terminus, the 185-residue chain is Cuticle protein 18.6, isoform A (185 aa).

7 consecutive repeat copies span residues 21–24, 33–36, 41–44, 54–57, 133–136, 139–142, and 150–153. The Chitin-binding type R&amp;R domain occupies 64 to 134; the sequence is HPQYSFAYNV…KEAGAHPAAA (71 aa).

In terms of biological role, component of the cuticle of migratory locust which contains more than 100 different structural proteins. This is Cuticle protein 18.6, isoform A from Locusta migratoria (Migratory locust).